The sequence spans 479 residues: Leucine-rich repeat-containing protein 74A (479 aa).

The segment covering 1–10 (MDDDDIEPLE) has biased composition (acidic residues). The tract at residues 1–29 (MDDDDIEPLEYETKDETEAALAPQSSEDT) is disordered. LRR repeat units follow at residues 119–140 (TVLK…SLME), 147–167 (YLQE…RIIS), 176–197 (SLWK…LLCQ), 204–225 (RIRS…YLGQ), 232–253 (GLQS…ALCN), 260–281 (TLKK…ALGD), 288–309 (CLVY…RISK), and 316–336 (CLQV…YSLI).

In Rattus norvegicus (Rat), this protein is Leucine-rich repeat-containing protein 74A.